Consider the following 184-residue polypeptide: Cysteine-rich atrial secretory protein (184 aa).

A signal peptide spans 1-26 (MATFQAHFFAAVMCVGVLGLSKLCGA). Intrachain disulfides connect cysteine 29-cysteine 34, cysteine 65-cysteine 111, cysteine 75-cysteine 82, cysteine 123-cysteine 155, and cysteine 135-cysteine 144. An N-linked (GlcNAc...) asparagine glycan is attached at asparagine 74.

Post-translationally, N-glycosylated. Highly expressed in atrium. Moderately expressed in the pericardium, pulmonary vein, nephridium, arteria anterior, ovotestis and connective tissue. Low expression found in intestine, lung plexus, diaphragm, subesophageal ganglion, ventricle and digestive gland. Very low expression found in columellar retractor, pedal nerves and cerebral ganglion. Not expressed in hemocytes.

Its subcellular location is the secreted. In Achatina achatina (Giant Ghana snail), this protein is Cysteine-rich atrial secretory protein.